We begin with the raw amino-acid sequence, 371 residues long: MTPDTSMKRVVVKIGSSSLTSLHGEISIRKLEALVDQVVKLKDAGYEVILVSSGAVAAGYRKLGFIQRPEKLPEKQASASIGQGLLMEAYSKLFLAHGYVASQILITRSDFSDEYRYNNVRNTMNVLLERGIIPIINENDTVTVNRLKFGDNDTLAAKVAGLIDADMLVILSDIDGLYDGNPRTNPEAKKIQRVSEITPDIEACAGDTGSIVGTGGMRSKLDAFKIVMASGIKGFLGQADAGDILYHAVHEQAEGTYFEAEGTLPLNQKEQWIAFNSGPEGEMILSDDCSRKITNGQSSLYLDGVQKIKGKFKSGSVVRLMDSKGTEIGLGIVNYSSVQLQEPEKKKELTNRALIDQEAFVCHVDFSLPVN.

Lysine 13 is a binding site for ATP. The substrate site is built by serine 53, aspartate 140, and asparagine 152. ATP is bound by residues 172–173 (SD) and 214–220 (TGGMRSK). The PUA domain occupies 280-356 (EGEMILSDDC…KELTNRALID (77 aa)).

This sequence belongs to the glutamate 5-kinase family.

Its subcellular location is the cytoplasm. It catalyses the reaction L-glutamate + ATP = L-glutamyl 5-phosphate + ADP. Its pathway is amino-acid biosynthesis; L-proline biosynthesis; L-glutamate 5-semialdehyde from L-glutamate: step 1/2. In terms of biological role, catalyzes the transfer of a phosphate group to glutamate to form L-glutamate 5-phosphate. The protein is Glutamate 5-kinase 2 (proJ) of Bacillus subtilis (strain 168).